The sequence spans 86 residues: UPF0335 protein BruAb1_1737 (86 aa).

Belongs to the UPF0335 family.

This chain is UPF0335 protein BruAb1_1737, found in Brucella abortus biovar 1 (strain 9-941).